The sequence spans 351 residues: UDP-3-O-acylglucosamine N-acyltransferase (351 aa).

His-240 (proton acceptor) is an active-site residue.

Belongs to the transferase hexapeptide repeat family. LpxD subfamily. In terms of assembly, homotrimer.

The catalysed reaction is a UDP-3-O-[(3R)-3-hydroxyacyl]-alpha-D-glucosamine + a (3R)-hydroxyacyl-[ACP] = a UDP-2-N,3-O-bis[(3R)-3-hydroxyacyl]-alpha-D-glucosamine + holo-[ACP] + H(+). It participates in bacterial outer membrane biogenesis; LPS lipid A biosynthesis. Catalyzes the N-acylation of UDP-3-O-acylglucosamine using 3-hydroxyacyl-ACP as the acyl donor. Is involved in the biosynthesis of lipid A, a phosphorylated glycolipid that anchors the lipopolysaccharide to the outer membrane of the cell. The polypeptide is UDP-3-O-acylglucosamine N-acyltransferase (Pseudomonas putida (strain ATCC 47054 / DSM 6125 / CFBP 8728 / NCIMB 11950 / KT2440)).